A 309-amino-acid chain; its full sequence is MRALITGVAGFVGKYLANHLTEQNVEVFGTSRNNEAKLPNVEMISLDIMDSQRVKKVISDIKPDYIFHLAAKSSVKDSWLNKKGTFSTNVFGTLHVLDAVRDSNLDCRILTIGSSEEYGMILPEESPVSEENQLRPMSPYGVSKASVGMLARQYVKAYGMDIIHTRTFNHIGPGQSLGFVTQDFAKQIVDIEMEKQEPIIKVGNLEAVRDFTDVRDIVQAYWLLSQYGKTGDVYNVCSGIGTRIQDVLDLLLAMANVKIDTELNPLQLRPSEVPTLIGSNKRLKDSTGWKPRIPLEKSLFEILQSYRQA.

NADP(+)-binding positions include 11–12, Arg-32, 47–48, and 71–73; these read FV, DI, and AKS. 114-115 contributes to the substrate binding site; the sequence is SS. Tyr-140 contributes to the NADP(+) binding site. Substrate contacts are provided by residues Asn-169, Asp-183, Arg-209, and 269-272; that span reads RPSE.

Belongs to the NAD(P)-dependent epimerase/dehydratase family. GDP-6-deoxy-D-mannose reductase subfamily.

The enzyme catalyses GDP-alpha-D-rhamnose + NAD(+) = GDP-4-dehydro-alpha-D-rhamnose + NADH + H(+). It catalyses the reaction GDP-alpha-D-rhamnose + NADP(+) = GDP-4-dehydro-alpha-D-rhamnose + NADPH + H(+). Functionally, reductase that catalyzes the conversion of GDP-6-deoxy-D-mannose to GDP-4-dehydro-6-deoxy-D-mannose (GDP-D-rhamnose). The polypeptide is GDP-6-deoxy-D-mannose reductase (rmd) (Aneurinibacillus thermoaerophilus).